Consider the following 160-residue polypeptide: Transcriptional repressor NrdR (160 aa).

The segment at 3 to 34 (CPFCGAEDTSVVDSRVSEEGSRIRRRRQCTAC) is a zinc-finger region. The ATP-cone domain maps to 49-139 (PQIIKQGGNR…VYRSFEDVGD (91 aa)).

It belongs to the NrdR family. The cofactor is Zn(2+).

Negatively regulates transcription of bacterial ribonucleotide reductase nrd genes and operons by binding to NrdR-boxes. The sequence is that of Transcriptional repressor NrdR from Nitrosomonas eutropha (strain DSM 101675 / C91 / Nm57).